A 387-amino-acid chain; its full sequence is Low specificity L-threonine aldolase (387 aa).

An N6-(pyridoxal phosphate)lysine modification is found at K213. A Glycyl lysine isopeptide (Lys-Gly) (interchain with G-Cter in ubiquitin) cross-link involves residue K228. Phosphoserine occurs at positions 367 and 369. T370 carries the phosphothreonine modification.

It belongs to the threonine aldolase family. In terms of assembly, homotetramer. Pyridoxal 5'-phosphate serves as cofactor.

The enzyme catalyses L-threonine = acetaldehyde + glycine. The catalysed reaction is L-allo-threonine = acetaldehyde + glycine. Its pathway is amino-acid biosynthesis; glycine biosynthesis; glycine from L-allo-threonine: step 1/1. It functions in the pathway amino-acid degradation; L-threonine degradation via aldolase pathway; acetaldehyde and glycine from L-threonine: step 1/1. Its function is as follows. Catalyzes the cleavage of L-allo-threonine and L-threonine to glycine and acetaldehyde. This is Low specificity L-threonine aldolase (GLY1) from Saccharomyces cerevisiae (strain ATCC 204508 / S288c) (Baker's yeast).